Consider the following 108-residue polypeptide: Thiosulfate sulfurtransferase GlpE (108 aa).

One can recognise a Rhodanese domain in the interval 17-105 (QEKEAVLVDI…WQRQFPAEVA (89 aa)). Catalysis depends on cysteine 65, which acts as the Cysteine persulfide intermediate.

Belongs to the GlpE family.

The protein localises to the cytoplasm. It catalyses the reaction thiosulfate + hydrogen cyanide = thiocyanate + sulfite + 2 H(+). It carries out the reaction thiosulfate + [thioredoxin]-dithiol = [thioredoxin]-disulfide + hydrogen sulfide + sulfite + 2 H(+). Its function is as follows. Transferase that catalyzes the transfer of sulfur from thiosulfate to thiophilic acceptors such as cyanide or dithiols. May function in a CysM-independent thiosulfate assimilation pathway by catalyzing the conversion of thiosulfate to sulfite, which can then be used for L-cysteine biosynthesis. This chain is Thiosulfate sulfurtransferase GlpE, found in Escherichia coli O8 (strain IAI1).